The primary structure comprises 643 residues: RNA-binding protein RO60 (643 aa).

Positions 63-473 (VENNAGGFVF…AFVNAPPTGK (411 aa)) constitute a TROVE domain. The segment at 186-390 (RTPTHLFEFV…SMPMTAMIRN (205 aa)) is RNA-binding. The segment at 465–643 (FVNAPPTGKR…IVHEFVTGKI (179 aa)) is VWFA-like domain. A divalent metal cation contacts are provided by Ser482, Ser484, and Thr549.

Belongs to the Ro 60 kDa family.

It localises to the cytoplasm. In terms of biological role, RNA-binding protein that binds to misfolded non-coding RNAs, pre-5S rRNA, and several small cytoplasmic RNA molecules known as Y RNAs. In Caenorhabditis elegans, this protein is RNA-binding protein RO60.